A 194-amino-acid chain; its full sequence is 3-isopropylmalate dehydratase small subunit (194 aa).

Belongs to the LeuD family. LeuD type 1 subfamily. In terms of assembly, heterodimer of LeuC and LeuD.

It catalyses the reaction (2R,3S)-3-isopropylmalate = (2S)-2-isopropylmalate. It functions in the pathway amino-acid biosynthesis; L-leucine biosynthesis; L-leucine from 3-methyl-2-oxobutanoate: step 2/4. In terms of biological role, catalyzes the isomerization between 2-isopropylmalate and 3-isopropylmalate, via the formation of 2-isopropylmaleate. The sequence is that of 3-isopropylmalate dehydratase small subunit from Leuconostoc mesenteroides subsp. mesenteroides (strain ATCC 8293 / DSM 20343 / BCRC 11652 / CCM 1803 / JCM 6124 / NCDO 523 / NBRC 100496 / NCIMB 8023 / NCTC 12954 / NRRL B-1118 / 37Y).